Reading from the N-terminus, the 454-residue chain is uncharacterized protein (454 aa).

It belongs to the outer membrane factor (OMF) (TC 1.B.17) family.

This is an uncharacterized protein from Haemophilus influenzae (strain ATCC 51907 / DSM 11121 / KW20 / Rd).